The following is a 236-amino-acid chain: Orotidine 5'-phosphate decarboxylase (236 aa).

Substrate-binding positions include Asp14, Lys36, 63-72, Thr122, Arg183, Gln192, Gly212, and Arg213; that span reads DLKFHDIPNT. Residue Lys65 is the Proton donor of the active site.

This sequence belongs to the OMP decarboxylase family. Type 1 subfamily. In terms of assembly, homodimer.

The enzyme catalyses orotidine 5'-phosphate + H(+) = UMP + CO2. It functions in the pathway pyrimidine metabolism; UMP biosynthesis via de novo pathway; UMP from orotate: step 2/2. Catalyzes the decarboxylation of orotidine 5'-monophosphate (OMP) to uridine 5'-monophosphate (UMP). The chain is Orotidine 5'-phosphate decarboxylase from Chromohalobacter salexigens (strain ATCC BAA-138 / DSM 3043 / CIP 106854 / NCIMB 13768 / 1H11).